A 96-amino-acid polypeptide reads, in one-letter code: Ubiquitin-like protein NEDD8-like protein 1 (96 aa).

Residues 75 to 96 (SQSDNSEKSEKSGKSEKDCILM) are disordered. Positions 79–96 (NSEKSEKSGKSEKDCILM) are enriched in basic and acidic residues.

It belongs to the ubiquitin family.

The chain is Ubiquitin-like protein NEDD8-like protein 1 (nedd8l1) from Dictyostelium discoideum (Social amoeba).